Reading from the N-terminus, the 141-residue chain is Large ribosomal subunit protein bL17 (141 aa).

Residues T120–A141 form a disordered region.

It belongs to the bacterial ribosomal protein bL17 family. Part of the 50S ribosomal subunit. Contacts protein L32.

The chain is Large ribosomal subunit protein bL17 from Novosphingobium aromaticivorans (strain ATCC 700278 / DSM 12444 / CCUG 56034 / CIP 105152 / NBRC 16084 / F199).